The following is a 174-amino-acid chain: Small ribosomal subunit protein uS5 (174 aa).

One can recognise an S5 DRBM domain in the interval 19–82; the sequence is LREKMIAVNR…EQARRGMFKV (64 aa).

Belongs to the universal ribosomal protein uS5 family. Part of the 30S ribosomal subunit. Contacts proteins S4 and S8.

In terms of biological role, with S4 and S12 plays an important role in translational accuracy. Located at the back of the 30S subunit body where it stabilizes the conformation of the head with respect to the body. This chain is Small ribosomal subunit protein uS5, found in Bordetella bronchiseptica (strain ATCC BAA-588 / NCTC 13252 / RB50) (Alcaligenes bronchisepticus).